A 455-amino-acid chain; its full sequence is Tubulin alpha chain (455 aa).

Gln11, Glu77, Ser145, Gly149, Thr150, Ser184, Asn211, and Asn233 together coordinate GTP. Glu77 is a binding site for Mg(2+). Glu259 is a catalytic residue.

It belongs to the tubulin family. Dimer of alpha and beta chains. A typical microtubule is a hollow water-filled tube with an outer diameter of 25 nm and an inner diameter of 15 nM. Alpha-beta heterodimers associate head-to-tail to form protofilaments running lengthwise along the microtubule wall with the beta-tubulin subunit facing the microtubule plus end conferring a structural polarity. Microtubules usually have 13 protofilaments but different protofilament numbers can be found in some organisms and specialized cells. Mg(2+) serves as cofactor.

Its subcellular location is the cytoplasm. It localises to the cytoskeleton. It carries out the reaction GTP + H2O = GDP + phosphate + H(+). Its function is as follows. Tubulin is the major constituent of microtubules, a cylinder consisting of laterally associated linear protofilaments composed of alpha- and beta-tubulin heterodimers. Microtubules grow by the addition of GTP-tubulin dimers to the microtubule end, where a stabilizing cap forms. Below the cap, tubulin dimers are in GDP-bound state, owing to GTPase activity of alpha-tubulin. The sequence is that of Tubulin alpha chain from Entamoeba histolytica (strain ATCC 30459 / HM-1:IMSS / ABRM).